Consider the following 237-residue polypeptide: Ribonuclease PH (237 aa).

Residues Arg-86 and 124-126 (GTR) each bind phosphate.

Belongs to the RNase PH family. As to quaternary structure, homohexameric ring arranged as a trimer of dimers.

The catalysed reaction is tRNA(n+1) + phosphate = tRNA(n) + a ribonucleoside 5'-diphosphate. Phosphorolytic 3'-5' exoribonuclease that plays an important role in tRNA 3'-end maturation. Removes nucleotide residues following the 3'-CCA terminus of tRNAs; can also add nucleotides to the ends of RNA molecules by using nucleoside diphosphates as substrates, but this may not be physiologically important. Probably plays a role in initiation of 16S rRNA degradation (leading to ribosome degradation) during starvation. In Bradyrhizobium sp. (strain ORS 278), this protein is Ribonuclease PH.